Reading from the N-terminus, the 244-residue chain is Protein A47 (244 aa).

Belongs to the orthopoxvirus A47 protein family.

In Variola virus, this protein is Protein A47.